Here is a 155-residue protein sequence, read N- to C-terminus: Fibroblast growth factor 1 (155 aa).

A2 carries the post-translational modification N-acetylalanine. Residues 2–15 (AEGETTTFRALTEK) constitute a propeptide that is removed on maturation. N33 is a binding site for heparin. The interval 127–143 (KKNGSSKLGPRTHFGQK) is heparin-binding.

Belongs to the heparin-binding growth factors family. As to quaternary structure, monomer. Homodimer. Interacts with FGFR1, FGFR2, FGFR3 and FGFR4. Affinity between fibroblast growth factors (FGFs) and their receptors is increased by heparan sulfate glycosaminoglycans that function as coreceptors. Found in a complex with FGFBP1, FGF1 and FGF2. Interacts with FGFBP1. Part of a Cu(2+)-dependent multiprotein aggregate containing FGF1, S100A13 and SYT1. Interacts with SYT1. Interacts with S100A13. Interacts with LRRC59. Interacts with CSNKA, CSNKB and FIBP. While binding with LRRC59, CSNKA and FIBP seem mutually exclusive, CSNKB and FIBP may cooperatively interact with FGF1. Forms a ternary complex with FGFR1 and ITGAV:ITGB3 and induces the recruitment of PTPN11 to the complex. In terms of processing, in the nucleus, phosphorylated by PKC/PRKCD.

Its subcellular location is the secreted. The protein localises to the cytoplasm. The protein resides in the cell cortex. It is found in the cytosol. It localises to the nucleus. In terms of biological role, plays an important role in the regulation of cell survival, cell division, angiogenesis, cell differentiation and cell migration. Functions as a potent mitogen in vitro. Acts as a ligand for FGFR1 and integrins. Binds to FGFR1 in the presence of heparin leading to FGFR1 dimerization and activation via sequential autophosphorylation on tyrosine residues which act as docking sites for interacting proteins, leading to the activation of several signaling cascades. Binds to integrin ITGAV:ITGB3. Its binding to integrin, subsequent ternary complex formation with integrin and FGFR1, and the recruitment of PTPN11 to the complex are essential for FGF1 signaling. Induces the phosphorylation and activation of FGFR1, FRS2, MAPK3/ERK1, MAPK1/ERK2 and AKT1. Can induce angiogenesis. The sequence is that of Fibroblast growth factor 1 (FGF1) from Ovis aries (Sheep).